A 166-amino-acid chain; its full sequence is Bile acid 7alpha-dehydratase (166 aa).

As to quaternary structure, homodimer.

The enzyme catalyses 7alpha,12alpha-dihydroxy-3-oxochol-4-en-24-oyl-CoA = 12alpha-hydroxy-3-oxochola-4,6-dien-24-oyl-CoA + H2O. It catalyses the reaction 7alpha-hydroxy-3-oxochol-4-en-24-oyl-CoA = 3-oxochol-4,6-dien-24-oyl-CoA + H2O. It carries out the reaction 7alpha,12alpha-dihydroxy-3-oxochol-4-en-24-oate = 12alpha-hydroxy-3-oxochola-4,6-dien-24-oate + H2O. The catalysed reaction is 7alpha-hydroxy-3-oxochol-4-en-24-oate = 3-oxochola-4,6-dien-24-oate + H2O. It functions in the pathway lipid metabolism; bile acid biosynthesis. Functionally, functions in the bile acid 7alpha-dehydroxylation pathway, which forms secondary bile acids via the 7alpha-dehydroxylation of primary bile acids, and is carried out by intestinal anaerobic bacteria. Catalyzes the dehydration step in this pathway, yielding a 3-oxo-Delta(4,6)-bile acid-CoA intermediate. In vitro, can act on the free bile acids (non CoA-conjugated) 7-alpha,12-alpha-dihydroxy-3-oxochol-4-enoate and 7-alpha-hydroxy-3-oxochol-4-enoate, but not on 7-alpha,12-alpha-dihydroxy-3-oxo-5-beta-cholanate, 3-alpha,7-alpha,12-alpha-trihydroxy-5-beta-cholanate or 7-beta-hydroxy-3-oxochol-4-enoate. The protein is Bile acid 7alpha-dehydratase of Clostridium scindens (strain JCM 10418 / VPI 12708).